The chain runs to 326 residues: Acetyl-coenzyme A carboxylase carboxyl transferase subunit alpha (326 aa).

The region spanning 44–298 (QLESRAEQLR…KEALLFHLNT (255 aa)) is the CoA carboxyltransferase C-terminal domain.

The protein belongs to the AccA family. As to quaternary structure, acetyl-CoA carboxylase is a heterohexamer composed of biotin carboxyl carrier protein (AccB), biotin carboxylase (AccC) and two subunits each of ACCase subunit alpha (AccA) and ACCase subunit beta (AccD).

It is found in the cytoplasm. The catalysed reaction is N(6)-carboxybiotinyl-L-lysyl-[protein] + acetyl-CoA = N(6)-biotinyl-L-lysyl-[protein] + malonyl-CoA. It participates in lipid metabolism; malonyl-CoA biosynthesis; malonyl-CoA from acetyl-CoA: step 1/1. Its function is as follows. Component of the acetyl coenzyme A carboxylase (ACC) complex. First, biotin carboxylase catalyzes the carboxylation of biotin on its carrier protein (BCCP) and then the CO(2) group is transferred by the carboxyltransferase to acetyl-CoA to form malonyl-CoA. This is Acetyl-coenzyme A carboxylase carboxyl transferase subunit alpha from Synechocystis sp. (strain ATCC 27184 / PCC 6803 / Kazusa).